The following is a 396-amino-acid chain: Elongation factor Tu 2 (396 aa).

In terms of domain architecture, tr-type G spans 10–206; sequence KPHVNVGTIG…ALDTYIPTPE (197 aa). Residues 19–26 are G1; it reads GHVDHGKT. 19-26 provides a ligand contact to GTP; sequence GHVDHGKT. Mg(2+) is bound at residue Thr-26. Residues 60–64 form a G2 region; that stretch reads GITIN. The tract at residues 81-84 is G3; it reads DCPG. Residues 81-85 and 136-139 each bind GTP; these read DCPGH and NKCD. Residues 136–139 are G4; sequence NKCD. Residues 174–176 are G5; it reads SAK.

It belongs to the TRAFAC class translation factor GTPase superfamily. Classic translation factor GTPase family. EF-Tu/EF-1A subfamily. In terms of assembly, monomer.

It localises to the cytoplasm. It catalyses the reaction GTP + H2O = GDP + phosphate + H(+). Its function is as follows. GTP hydrolase that promotes the GTP-dependent binding of aminoacyl-tRNA to the A-site of ribosomes during protein biosynthesis. The polypeptide is Elongation factor Tu 2 (Acidovorax sp. (strain JS42)).